The chain runs to 4544 residues: Prolow-density lipoprotein receptor-related protein 1 (4544 aa).

Residues 1-19 form the signal peptide; it reads MLTPPLLLLLPLLSALVAA. The Extracellular segment spans residues 20 to 4419; sequence AIDAPKTCSP…EHVFSQQQPG (4400 aa). 2 LDL-receptor class A domains span residues 25–66 and 70–110; these read KTCS…ICPQ and QRCQ…HCRE. 6 cysteine pairs are disulfide-bonded: C27/C40, C34/C53, C47/C64, C72/C85, C79/C98, and C92/C108. The EGF-like 1 domain maps to 111–149; the sequence is LQGNCSRLGCQHHCVPTLDGPTCYCNSSFQLQADGKTCK. A glycan (N-linked (GlcNAc...) asparagine) is linked at N114. Cystine bridges form between C115/C124, C120/C133, C135/C148, C154/C164, C160/C173, and C175/C188. N136 is a glycosylation site (N-linked (GlcNAc...) asparagine). Residues 150–189 form the EGF-like 2; calcium-binding domain; the sequence is DFDECSVYGTCSQLCTNTDGSFICGCVEGYLLQPDNRSCK. N185, N239, and N274 each carry an N-linked (GlcNAc...) asparagine glycan. LDL-receptor class B repeat units follow at residues 292 to 334, 335 to 378, and 379 to 422; these read GNFY…DPAM, GKVF…DLVS, and RLVY…FENY. N357 carries an N-linked (GlcNAc...) asparagine glycan. N-linked (GlcNAc...) asparagine glycosylation is present at N446. An EGF-like 3 domain is found at 474–520; the sequence is RSHACENDQYGKPGGCSDICLLANSHKARTCRCRSGFSLGSDGKSCK. 3 disulfide bridges follow: C478/C493, C489/C504, and C506/C519. LDL-receptor class B repeat units follow at residues 571-613, 614-659, 660-710, and 711-754; these read GFIY…DWMG, DNLY…DPLN, GWMY…DIPA, and GRLY…HGNY. N-linked (GlcNAc...) (complex) asparagine glycosylation is present at N729. One can recognise an EGF-like 4 domain in the interval 803 to 843; sequence GTNKCRVNNGGCSSLCLATPGSRQCACAEDQVLDADGVTCL. Disulfide bonds link C807–C818, C814–C827, C829–C842, C854–C866, C861–C879, C873–C890, C895–C907, C902–C920, C914–C931, C936–C948, C943–C961, C955–C971, C976–C989, C984–C1002, C996–C1011, C1015–C1027, C1022–C1040, C1034–C1051, C1062–C1075, C1069–C1088, C1082–C1097, C1104–C1118, C1112–C1131, C1125–C1140, C1145–C1159, C1152–C1172, C1166–C1182, C1185–C1196, C1192–C1206, C1208–C1221, C1227–C1237, C1233–C1246, and C1248–C1261. LDL-receptor class A domains are found at residues 852-892, 893-933, 934-973, 974-1013, 1013-1053, 1060-1099, 1102-1142, and 1143-1182; these read PQCQ…LCHQ, HTCP…TCSA, RTCPPNQFSCASGRCIPISWTCDLDDDCGDRSDESASCAY, PTCFPLTQFTCNNGRCININWRCDNDNDCGDNSDEAGCSH, HSCS…NCTN, GGCHTDEFQCRLDGLCIPLRWRCDGDTDCMDSSDEKSCEG, HVCD…NCES, and LACRPPSHPCANNTSVCLPPDKLCDGNDDCGDGSDEGELC. Ca(2+) contacts are provided by W871, D874, D876, D878, D884, and E885. An N-linked (GlcNAc...) asparagine glycan is attached at N928. Ca(2+)-binding residues include W1032, D1035, D1037, D1039, D1045, and E1046. N-linked (GlcNAc...) asparagine glycosylation occurs at N1050. The Ca(2+) site is built by W1080, D1083, D1085, D1087, D1093, and E1094. Residues N1154 and N1155 are each glycosylated (N-linked (GlcNAc...) asparagine). 2 EGF-like domains span residues 1183-1222 and 1223-1262; these read DQCSLNNGGCSHNCSVAPGEGIVCSCPLGMELGPDNHTCQ and IQSYCAKHLKCSQKCDQNKFSVKCSCYEGWVLEPDGESCR. N-linked (GlcNAc...) asparagine glycosylation is found at N1195 and N1218. LDL-receptor class B repeat units lie at residues 1309–1355, 1356–1398, 1399–1445, 1446–1490, and 1491–1531; these read SALY…DWIA, GNIY…DPRD, GILF…DYLE, KRIL…YGGE, and VYWT…YHPS. Residue N1511 is glycosylated (N-linked (GlcNAc...) (complex) asparagine). Residues 1536–1579 enclose the EGF-like 7 domain; it reads APNPCEANGGQGPCSHLCLINYNRTVSCACPHLMKLHKDNTTCY. 3 disulfides stabilise this stretch: C1540/C1553, C1549/C1563, and C1565/C1578. N-linked (GlcNAc...) asparagine glycans are attached at residues N1558, N1575, N1616, and N1645. 4 LDL-receptor class B repeats span residues 1627–1669, 1670–1713, 1714–1753, and 1754–1798; these read QRVY…DWVS, RNLF…HPLR, GKLYWTDGDNISMANMDGSNRTLLFSGQKGPVGLAIDFPE, and SKLY…MGDK. Residues N1723, N1733, N1763, and N1825 are each glycosylated (N-linked (GlcNAc...) asparagine). Positions 1846–1887 constitute an EGF-like 8 domain; that stretch reads GTNPCSVNNGDCSQLCLPTSETTRSCMCTAGYSLRSGQQACE. 3 disulfide bridges follow: C1850–C1861, C1857–C1871, and C1873–C1886. N-linked (GlcNAc...) asparagine glycosylation is present at N1933. LDL-receptor class B repeat units follow at residues 1934–1976, 1977–2019, 2020–2063, and 2064–2107; these read DTIY…DWIA, GNIY…HPEK, GYLF…DYQD, and GKLY…FEDF. Residue N1995 is glycosylated (N-linked (GlcNAc...) asparagine). K2009 is subject to N6-acetyllysine. N2048 carries an N-linked (GlcNAc...) asparagine glycan. Residues N2117 and N2127 are each glycosylated (N-linked (GlcNAc...) asparagine). The EGF-like 9 domain occupies 2155-2195; it reads GTNVCAVANGGCQQLCLYRGRGQRACACAHGMLAEDGASCR. Cystine bridges form between C2159-C2170, C2166-C2180, and C2182-C2194. LDL-receptor class B repeat units follow at residues 2253 to 2294, 2295 to 2343, 2344 to 2388, 2389 to 2431, and 2432 to 2473; these read NRIF…HRGW, DTLY…DECQ, NLMF…DHRA, EKLY…YGEH, and IFWT…VAND. N2472 carries an N-linked (GlcNAc...) asparagine glycan. Residues 2478-2518 enclose the EGF-like 10 domain; that stretch reads ELSPCRINNGGCQDLCLLTHQGHVNCSCRGGRILQDDLTCR. 3 cysteine pairs are disulfide-bonded: C2482/C2493, C2489/C2503, and C2505/C2517. Residue N2502 is glycosylated (N-linked (GlcNAc...) asparagine). N-linked (GlcNAc...) asparagine glycosylation occurs at N2521. LDL-receptor class A domains are found at residues 2522–2563, 2564–2602, 2603–2641, 2642–2690, 2694–2732, 2732–2771, and 2772–2814; these read SSCR…YCNS, RRCKKTFRQCSNGRCVSNMLWCNGADDCGDGSDEIPCNK, TACGVGEFRCRDGTCIGNSSRCNQFVDCEDASDEMNCSA, TDCS…DCPG, PRCPLNYFACPSGRCIPMSWTCDKEDDCEHGEDETHCNK, KFCSEAQFECQNHRCISKQWLCDGSDDCGDGSDEAAHCEG, and KTCG…GCLY. Intrachain disulfides connect C2524-C2537, C2532-C2550, C2544-C2561, C2566-C2578, C2573-C2591, and C2585-C2600. Residue N2539 is glycosylated (N-linked (GlcNAc...) asparagine). An N-linked (GlcNAc...) asparagine glycan is attached at N2601. Cystine bridges form between C2605-C2617, C2612-C2630, C2624-C2639, C2644-C2666, C2660-C2679, C2673-C2688, C2696-C2708, C2703-C2721, C2715-C2730, C2734-C2746, C2741-C2759, C2753-C2769, C2774-C2787, C2781-C2800, and C2794-C2812. N-linked (GlcNAc...) asparagine glycosylation is found at N2620 and N2638. The N-linked (GlcNAc...) asparagine glycan is linked to N2815. 3 LDL-receptor class A domains span residues 2816–2855, 2856–2899, and 2902–2940; these read STCDDREFMCQNRQCIPKHFVCDHDRDCADGSDESPECEY, PTCG…HCTS, and HKCNASSQFLCSSGRCVAEALLCNGQDDCGDSSDERGCH. 15 cysteine pairs are disulfide-bonded: C2818–C2830, C2825–C2843, C2837–C2853, C2858–C2870, C2865–C2884, C2878–C2897, C2904–C2917, C2912–C2930, C2924–C2939, C2944–C2956, C2952–C2965, C2967–C2980, C2986–C2996, C2992–C3005, and C3007–C3021. A glycan (N-linked (GlcNAc...) asparagine) is linked at N2905. In terms of domain architecture, EGF-like 11 spans 2941–2981; that stretch reads INECLSRKLSGCSQDCEDLKIGFKCRCRPGFRLKDDGRTCA. The region spanning 2982-3022 is the EGF-like 12; calcium-binding domain; it reads DVDECSTTFPCSQRCINTHGSYKCLCVEGYAPRGGDPHSCK. N-linked (GlcNAc...) asparagine glycans are attached at residues N3048 and N3089. 5 LDL-receptor class B repeats span residues 3069-3113, 3114-3156, 3157-3200, 3201-3243, and 3244-3284; these read QMIY…DWVG, GNLY…DVQN, GYLY…DYVT, ERIY…FEDY, and VYWT…FHAL. An N-linked (GlcNAc...) asparagine glycan is attached at N3264. The EGF-like 13 domain maps to 3290 to 3331; sequence PNHPCKVNNGGCSNLCLLSPGGGHKCACPTNFYLGSDGRTCV. Intrachain disulfides connect C3294-C3305, C3301-C3315, and C3317-C3330. 11 consecutive LDL-receptor class A domains span residues 3332–3371, 3372–3410, 3411–3450, 3451–3491, 3492–3533, 3534–3572, 3573–3611, 3611–3649, 3652–3692, 3693–3733, and 3739–3778; these read SNCTASQFVCKNDKCIPFWWKCDTEDDCGDHSDEPPDCPE, FKCRPGQFQCSTGICTNPAFICDGDNDCQDNSDEANCDI, HVCLPSQFKCTNTNRCIPGIFRCNGQDNCGDGEDERDCPE, VTCA…NCTQ, MTCG…ECDE, RTCEPYQFRCKNNRCVPGRWQCDYDNDCGDNSDEESCTP, RPCSESEFSCANGRCIAGRWKCDGDHDCADGSDEKDCTP, PRCDMDQFQCKSGHCIPLRWRCDADADCMDGSDEEACGT, RTCP…ECAR, FVCP…DCEP, and THCKDKKEFLCRNQRCLSSSLRCNMFDDCGDGSDEEDCSI. An N-linked (GlcNAc...) asparagine glycan is attached at N3333. 39 cysteine pairs are disulfide-bonded: C3334–C3346, C3341–C3359, C3353–C3369, C3374–C3386, C3381–C3399, C3393–C3408, C3413–C3426, C3420–C3439, C3433–C3448, C3453–C3466, C3460–C3479, C3473–C3489, C3494–C3507, C3501–C3520, C3514–C3531, C3536–C3548, C3543–C3561, C3555–C3570, C3575–C3587, C3582–C3600, C3594–C3609, C3613–C3625, C3620–C3638, C3632–C3647, C3654–C3666, C3661–C3679, C3673–C3690, C3695–C3709, C3703–C3722, C3716–C3731, C3741–C3754, C3749–C3767, C3761–C3776, C3785–C3798, C3792–C3807, C3809–C3822, C3828–C3838, C3834–C3847, and C3849–C3860. N3488 carries N-linked (GlcNAc...) asparagine glycosylation. N-linked (GlcNAc...) asparagine glycosylation is present at N3662. 2 consecutive EGF-like domains span residues 3781–3823 and 3824–3861; these read KLTS…PGCQ and DINECLRFGTCSQLCNNTKGGHLCSCARNFMKTHNTCK. The N-linked (GlcNAc...) asparagine glycan is linked to N3788. The N-linked (GlcNAc...) asparagine glycan is linked to N3839. LDL-receptor class B repeat units lie at residues 3912-3954, 3970-4012, 4013-4056, and 4057-4101; these read GRVY…HLNI, GNVY…DPLR, GTMY…DYHN, and ERLY…FEDY. Positions 3940-3943 match the Recognition site for proteolytical processing motif; sequence RHRR. N3953 carries N-linked (GlcNAc...) asparagine glycosylation. N-linked (GlcNAc...) asparagine glycans are attached at residues N4075 and N4125. 7 EGF-like domains span residues 4147–4183, 4196–4232, 4232–4268, 4268–4304, 4304–4340, 4340–4375, and 4373–4409; these read VTNPCDRKKCEWLCLLSPSGPVCTCPNGKRLDNGTCV, RPGTCNLQCFNGGSCFLNARRQPKCRCQPRYTGDKCE, ELDQCWEHCRNGGTCAASPSGMPTCRCPTGFTGPKCT, TQQVCAGYCANNSTCTVNQGNQPQCRCLPGFLGDRCQ, QYRQCSGYCENFGTCQMAADGSRQCRCTAYFEGSRCE, EVNKCSRCLEGACVVNKQSGDVTCNCTDGRVAPSCL, and SCLTCVGHCSNGGSCTMNSKMMPECQCPPHMTGPRCE. 17 disulfide bridges follow: C4151–C4160, C4156–C4169, C4171–C4182, C4200–C4210, C4204–C4220, C4222–C4231, C4236–C4246, C4240–C4256, C4258–C4267, C4272–C4282, C4276–C4292, C4294–C4303, C4308–C4318, C4312–C4328, C4330–C4339, C4344–C4352, and C4347–C4363. N4179 carries an N-linked (GlcNAc...) asparagine glycan. 2 N-linked (GlcNAc...) asparagine glycosylation sites follow: N4278 and N4279. N-linked (GlcNAc...) asparagine glycosylation is present at N4364. 4 cysteine pairs are disulfide-bonded: C4365–C4374, C4377–C4387, C4381–C4397, and C4399–C4408. Residues 4420–4444 traverse the membrane as a helical segment; the sequence is HIASILIPLLLLLLLVLVAGVVFWY. Over 4445-4544 the chain is Cytoplasmic; that stretch reads KRRVQGAKGF…PEDEIGDPLA (100 aa). The tract at residues 4445 to 4544 is interaction with MAFB; sequence KRRVQGAKGF…PEDEIGDPLA (100 aa). Phosphothreonine is present on T4460. The NPXY motif signature appears at 4502–4507; that stretch reads FTNPVY. Phosphotyrosine is present on Y4507. S4517, S4520, and S4523 each carry phosphoserine.

The protein belongs to the LDLR family. Heterodimer of an 85-kDa membrane-bound carboxyl subunit and a non-covalently attached 515-kDa N-terminal subunit. Intracellular domain interacts with MAFB. Found in a complex with PID1/PCLI1, LRP1 and CUBNI. Interacts with SNX17, PID1/PCLI1, PDGF and CUBN. The intracellular domain interacts with SHC1, GULP1 and DAB1. Can weakly interact (via NPXY motif) with DAB2 (via PID domain); the interaction is enhanced by tyrosine phosphorylation of the NPXY motif. Interacts with MDK; promotes neuronal survival. Interacts with LRPAP1; this interaction is followed by rapid internalization. Interacts with uPA/PLAU and PAI1/SERPINE1, either individually or in complex with each other, leading to rapid endocytosis; this interaction is abolished in the presence of LRPAP1/RAP. Also interacts with tPA/PLAT alone or in complex with SERPINE1. Interacts with the urokinase receptor PLAUR; this interaction leads to PLAUR internalization and is impaired in the presence of SORL1. Interacts with PDGFB. Interacts with TAU/MAPT, leading to endocytosis; this interaction is reduced in the presence of LRPAP1/RAP. Interacts with IGFBP3; this interaction mediates cell growth inhibition independently of IGF1. Interacts with ADGRG6. As to quaternary structure, (Microbial infection) Interacts with bacterial exotoxins. In terms of assembly, (Microbial infection) Interacts with Rift valley fever virus (RVFV) glycoprotein N; this interaction facilitates virus entry. Cleaved into a 85 kDa membrane-spanning subunit (LRP-85) and a 515 kDa large extracellular domain (LRP-515) that remains non-covalently associated. Gamma-secretase-dependent cleavage of LRP-85 releases the intracellular domain from the membrane. Post-translationally, the N-terminus is blocked. In terms of processing, phosphorylated on serine and threonine residues. Phosphorylated on tyrosine residues upon stimulation with PDGF. Tyrosine phosphorylation promotes interaction with SHC1. Most abundant in liver, brain and lung.

The protein localises to the cell membrane. It localises to the membrane. It is found in the coated pit. Its subcellular location is the cytoplasm. The protein resides in the nucleus. The protein localises to the golgi outpost. It localises to the cytoskeleton. It is found in the microtubule organizing center. Its function is as follows. Endocytic receptor involved in endocytosis and in phagocytosis of apoptotic cells. Required for early embryonic development. Involved in cellular lipid homeostasis. Involved in the plasma clearance of chylomicron remnants and activated LRPAP1 (alpha 2-macroglobulin), as well as the local metabolism of complexes between plasminogen activators and their endogenous inhibitors. Acts as an LRPAP1 alpha-2-macroglobulin receptor. Acts as TAU/MAPT receptor and controls the endocytosis of TAU/MAPT as well as its subsequent spread. May modulate cellular events, such as APP metabolism, kinase-dependent intracellular signaling, neuronal calcium signaling as well as neurotransmission. Also acts as a receptor for IGFBP3 to mediate cell growth inhibition. Functionally, (Microbial infection) Functions as a receptor for Pseudomonas aeruginosa exotoxin A. This chain is Prolow-density lipoprotein receptor-related protein 1, found in Homo sapiens (Human).